The sequence spans 96 residues: Large ribosomal subunit protein bL21 (96 aa).

Residues 73-84 (KRRKRYQSRNGH) are compositionally biased toward basic residues. The disordered stretch occupies residues 73-96 (KRRKRYQSRNGHRQQMTQIEVVSL). A compositionally biased stretch (polar residues) spans 85 to 96 (RQQMTQIEVVSL).

This sequence belongs to the bacterial ribosomal protein bL21 family. In terms of assembly, part of the 50S ribosomal subunit. Contacts protein L20.

This protein binds to 23S rRNA in the presence of protein L20. The polypeptide is Large ribosomal subunit protein bL21 (Chlorobium luteolum (strain DSM 273 / BCRC 81028 / 2530) (Pelodictyon luteolum)).